The sequence spans 239 residues: Ribosomal RNA small subunit methyltransferase G (239 aa).

S-adenosyl-L-methionine is bound by residues Gly77, Phe82, 128-129, and Arg146; that span reads AE. Residues 215-239 form a disordered region; it reads DKRSQTPKKYPRKPGTPNKSPLLEK.

The protein belongs to the methyltransferase superfamily. RNA methyltransferase RsmG family.

Its subcellular location is the cytoplasm. In terms of biological role, specifically methylates the N7 position of guanine in position 535 of 16S rRNA. The protein is Ribosomal RNA small subunit methyltransferase G of Staphylococcus saprophyticus subsp. saprophyticus (strain ATCC 15305 / DSM 20229 / NCIMB 8711 / NCTC 7292 / S-41).